A 263-amino-acid polypeptide reads, in one-letter code: MALQIPSLLLLAAVVVLMVLSSPGTEGGDSERHFVVQFQPFCYFTNGTQRIRYVTRYIYNREEYLRFDSDVGEYRAVTELGRPDAEYYNKQYLERTRAELDTVCRYNYEETEVPTSLRRLEQPNVVISLSRTEALNHHNTLVCSVTDFYPAKIKVRWFRNGQEETVGVSSTQLIRNGDWTFQVLVMLEMTPRRGEVYTCHVEHPSLKSPITVEWRAQSESARSKMLSGIGGCVLGVIFLGLGLFIRHRSQKGPRGPPPAGLLQ.

A signal peptide spans 1–27 (MALQIPSLLLLAAVVVLMVLSSPGTEG). Positions 28–120 (GDSERHFVVQ…TEVPTSLRRL (93 aa)) are beta-1. At 28-224 (GDSERHFVVQ…RAQSESARSK (197 aa)) the chain is on the extracellular side. 2 disulfides stabilise this stretch: Cys-42–Cys-104 and Cys-143–Cys-199. The N-linked (GlcNAc...) asparagine glycan is linked to Asn-46. The interval 121-214 (EQPNVVISLS…SLKSPITVEW (94 aa)) is beta-2. The Ig-like C1-type domain maps to 123–211 (PNVVISLSRT…EHPSLKSPIT (89 aa)). Residues 215–224 (RAQSESARSK) form a connecting peptide region. Residues 225-245 (MLSGIGGCVLGVIFLGLGLFI) traverse the membrane as a helical segment. Residues 246 to 263 (RHRSQKGPRGPPPAGLLQ) lie on the Cytoplasmic side of the membrane.

The protein belongs to the MHC class II family.

It localises to the membrane. This Mus musculus (Mouse) protein is H-2 class II histocompatibility antigen, A-U beta chain.